We begin with the raw amino-acid sequence, 429 residues long: UDP-N-acetylglucosamine 1-carboxyvinyltransferase (429 aa).

22-23 contacts phosphoenolpyruvate; it reads KN. Arginine 102 provides a ligand contact to UDP-N-acetyl-alpha-D-glucosamine. Cysteine 126 (proton donor) is an active-site residue. 2-(S-cysteinyl)pyruvic acid O-phosphothioketal is present on cysteine 126. UDP-N-acetyl-alpha-D-glucosamine-binding positions include 171-174, aspartate 316, and isoleucine 338; that span reads KVSV.

It belongs to the EPSP synthase family. MurA subfamily.

The protein localises to the cytoplasm. The catalysed reaction is phosphoenolpyruvate + UDP-N-acetyl-alpha-D-glucosamine = UDP-N-acetyl-3-O-(1-carboxyvinyl)-alpha-D-glucosamine + phosphate. It functions in the pathway cell wall biogenesis; peptidoglycan biosynthesis. In terms of biological role, cell wall formation. Adds enolpyruvyl to UDP-N-acetylglucosamine. This Azorhizobium caulinodans (strain ATCC 43989 / DSM 5975 / JCM 20966 / LMG 6465 / NBRC 14845 / NCIMB 13405 / ORS 571) protein is UDP-N-acetylglucosamine 1-carboxyvinyltransferase.